A 116-amino-acid chain; its full sequence is Protein Rev (116 aa).

Serine 5 and serine 8 each carry phosphoserine; by host CK2. The tract at residues 18–26 (LIKLLYQSN) is homomultimerization. A disordered region spans residues 23–48 (YQSNPPPSPEGTRQARRNRRRRWRER). A Nuclear localization signal and RNA-binding (RRE) motif is present at residues 34–50 (TRQARRNRRRRWRERQR). Residues 36–47 (QARRNRRRRWRE) are compositionally biased toward basic residues. The Nuclear export signal and binding to XPO1 motif lies at 73–84 (LQLPPLERLTLD). A disordered region spans residues 90–116 (GNSGAQGVGSPQILVESPAVLDSGTKE). Phosphoserine; by host occurs at positions 92 and 99.

This sequence belongs to the HIV-1 REV protein family. In terms of assembly, homomultimer; when bound to the RRE. Multimeric assembly is essential for activity and may involve XPO1. Binds to human KPNB1, XPO1, TNPO1, RANBP5 and IPO7. Interacts with the viral Integrase. Interacts with human KHDRBS1. Interacts with human NAP1; this interaction decreases Rev multimerization and stimulates its activity. Interacts with human DEAD-box helicases DDX3 and DDX24; these interactions may serve for viral RNA export to the cytoplasm and packaging, respectively. Interacts with human PSIP1; this interaction may inhibit HIV-1 DNA integration by promoting dissociation of the Integrase-LEDGF/p75 complex. Asymmetrically arginine dimethylated at one site by host PRMT6. Methylation impairs the RNA-binding activity and export of viral RNA from the nucleus to the cytoplasm. In terms of processing, phosphorylated by protein kinase CK2. Presence of, and maybe binding to the N-terminus of the regulatory beta subunit of CK2 is necessary for CK2-mediated Rev's phosphorylation.

The protein localises to the host nucleus. It is found in the host nucleolus. The protein resides in the host cytoplasm. Escorts unspliced or incompletely spliced viral pre-mRNAs (late transcripts) out of the nucleus of infected cells. These pre-mRNAs carry a recognition sequence called Rev responsive element (RRE) located in the env gene, that is not present in fully spliced viral mRNAs (early transcripts). This function is essential since most viral proteins are translated from unspliced or partially spliced pre-mRNAs which cannot exit the nucleus by the pathway used by fully processed cellular mRNAs. Rev itself is translated from a fully spliced mRNA that readily exits the nucleus. Rev's nuclear localization signal (NLS) binds directly to KPNB1/Importin beta-1 without previous binding to KPNA1/Importin alpha-1. KPNB1 binds to the GDP bound form of RAN (Ran-GDP) and targets Rev to the nucleus. In the nucleus, the conversion from Ran-GDP to Ran-GTP dissociates Rev from KPNB1 and allows Rev's binding to the RRE in viral pre-mRNAs. Rev multimerization on the RRE via cooperative assembly exposes its nuclear export signal (NES) to the surface. Rev can then form a complex with XPO1/CRM1 and Ran-GTP, leading to nuclear export of the complex. Conversion from Ran-GTP to Ran-GDP mediates dissociation of the Rev/RRE/XPO1/RAN complex, so that Rev can return to the nucleus for a subsequent round of export. Beside KPNB1, also seems to interact with TNPO1/Transportin-1, RANBP5/IPO5 and IPO7/RANBP7 for nuclear import. The nucleoporin-like HRB/RIP is an essential cofactor that probably indirectly interacts with Rev to release HIV RNAs from the perinuclear region to the cytoplasm. The protein is Protein Rev of Homo sapiens (Human).